Reading from the N-terminus, the 269-residue chain is Signal recognition particle receptor subunit beta (269 aa).

The chain crosses the membrane as a helical span at residues 35–55; that stretch reads LLSVAVAVLAVLLTLVFWKFI. GTP contacts are provided by residues 69 to 77 and 90 to 93; these read GLCDSGKTL and TQTS. A Phosphoserine modification is found at S110. Position 118 (G118) interacts with GTP. T212 bears the Phosphothreonine mark. A GTP-binding site is contributed by A246.

Belongs to the SRP receptor beta subunit family. As to quaternary structure, heterodimer with SRPRA.

Its subcellular location is the endoplasmic reticulum membrane. Its function is as follows. Component of the signal recognition particle (SRP) complex receptor (SR). Ensures, in conjunction with the SRP complex, the correct targeting of the nascent secretory proteins to the endoplasmic reticulum membrane system. May mediate the membrane association of SR. The chain is Signal recognition particle receptor subunit beta (Srprb) from Rattus norvegicus (Rat).